Consider the following 150-residue polypeptide: Small ribosomal subunit protein eS6 (150 aa).

This sequence belongs to the eukaryotic ribosomal protein eS6 family.

The polypeptide is Small ribosomal subunit protein eS6 (Caldivirga maquilingensis (strain ATCC 700844 / DSM 13496 / JCM 10307 / IC-167)).